The following is a 563-amino-acid chain: Inositol-3-phosphate synthase 1-A (563 aa).

This sequence belongs to the myo-inositol 1-phosphate synthase family. It depends on NAD(+) as a cofactor.

It is found in the cytoplasm. It catalyses the reaction D-glucose 6-phosphate = 1D-myo-inositol 3-phosphate. Its pathway is polyol metabolism; myo-inositol biosynthesis; myo-inositol from D-glucose 6-phosphate: step 1/2. Its function is as follows. Key enzyme in myo-inositol biosynthesis pathway that catalyzes the conversion of glucose 6-phosphate to 1-myo-inositol 1-phosphate in a NAD-dependent manner. Rate-limiting enzyme in the synthesis of all inositol-containing compounds. In Xenopus laevis (African clawed frog), this protein is Inositol-3-phosphate synthase 1-A (isyna1-a).